The chain runs to 375 residues: tRNA-specific 2-thiouridylase MnmA (375 aa).

Residues 12–19 (GMSGGVDS) and Met-38 each bind ATP. Residues 98–100 (NPD) form an interaction with target base in tRNA region. Cys-103 acts as the Nucleophile in catalysis. Cysteines 103 and 200 form a disulfide. Residue Gly-127 participates in ATP binding. The interaction with tRNA stretch occupies residues 150 to 152 (KDQ). The active-site Cysteine persulfide intermediate is the Cys-200. The tract at residues 312 to 313 (RY) is interaction with tRNA.

Belongs to the MnmA/TRMU family.

It is found in the cytoplasm. The catalysed reaction is S-sulfanyl-L-cysteinyl-[protein] + uridine(34) in tRNA + AH2 + ATP = 2-thiouridine(34) in tRNA + L-cysteinyl-[protein] + A + AMP + diphosphate + H(+). Its function is as follows. Catalyzes the 2-thiolation of uridine at the wobble position (U34) of tRNA, leading to the formation of s(2)U34. This chain is tRNA-specific 2-thiouridylase MnmA, found in Levilactobacillus brevis (strain ATCC 367 / BCRC 12310 / CIP 105137 / JCM 1170 / LMG 11437 / NCIMB 947 / NCTC 947) (Lactobacillus brevis).